The primary structure comprises 213 residues: Holliday junction branch migration complex subunit RuvA (213 aa).

A domain I region spans residues 1-64; the sequence is MIARLVGFLV…EDSITLFGFA (64 aa). The segment at 65 to 143 is domain II; sequence SYLERDWFRL…AIALFSSAKG (79 aa). Residues 144-159 form a flexible linker region; sequence DHLAVEDISQPAASAH. Residues 160–213 form a domain III region; it reads HAGNFMADAVSALLNLGFKPAEAQRVVQLASEELGDQATLDSLVRLALRLSSKH.

It belongs to the RuvA family. As to quaternary structure, homotetramer. Forms an RuvA(8)-RuvB(12)-Holliday junction (HJ) complex. HJ DNA is sandwiched between 2 RuvA tetramers; dsDNA enters through RuvA and exits via RuvB. An RuvB hexamer assembles on each DNA strand where it exits the tetramer. Each RuvB hexamer is contacted by two RuvA subunits (via domain III) on 2 adjacent RuvB subunits; this complex drives branch migration. In the full resolvosome a probable DNA-RuvA(4)-RuvB(12)-RuvC(2) complex forms which resolves the HJ.

It is found in the cytoplasm. Its function is as follows. The RuvA-RuvB-RuvC complex processes Holliday junction (HJ) DNA during genetic recombination and DNA repair, while the RuvA-RuvB complex plays an important role in the rescue of blocked DNA replication forks via replication fork reversal (RFR). RuvA specifically binds to HJ cruciform DNA, conferring on it an open structure. The RuvB hexamer acts as an ATP-dependent pump, pulling dsDNA into and through the RuvAB complex. HJ branch migration allows RuvC to scan DNA until it finds its consensus sequence, where it cleaves and resolves the cruciform DNA. The sequence is that of Holliday junction branch migration complex subunit RuvA from Zymomonas mobilis subsp. mobilis (strain ATCC 31821 / ZM4 / CP4).